The primary structure comprises 279 residues: Prostatic spermine-binding protein (279 aa).

The signal sequence occupies residues 1–17 (MLLLVTLALLAGPTCRA). Glutamine 18 bears the Pyrrolidone carboxylic acid mark. The 134-residue stretch at 18–151 (QNILGNNVGT…LNGMGFKWKN (134 aa)) folds into the Jacalin-type lectin domain. Asparagine 62 is a glycosylation site (N-linked (GlcNAc...) asparagine). 2 stretches are compositionally biased toward acidic residues: residues 160 to 177 (DDDK…NEED) and 185 to 279 (NDHD…EEEE). The segment at 160–279 (DDDKEDDDDE…DDDNGDEEEE (120 aa)) is disordered.

It to mouse SBP. Prostate.

Its function is as follows. Spermine-binding protein is an androgen regulated ventral prostate glycoprotein that binds various polyamines. In Rattus norvegicus (Rat), this protein is Prostatic spermine-binding protein (Sbp).